Reading from the N-terminus, the 78-residue chain is Ferredoxin 7Fe (78 aa).

4Fe-4S ferredoxin-type domains lie at 2–29 (AYVI…IHEG) and 31–60 (DQYY…HEDF). [3Fe-4S] cluster is bound by residues C9 and C17. [4Fe-4S] cluster contacts are provided by C21, C40, C43, and C46. C50 lines the [3Fe-4S] cluster pocket.

In terms of assembly, monomer. It depends on [4Fe-4S] cluster as a cofactor. [3Fe-4S] cluster serves as cofactor.

This chain is Ferredoxin 7Fe (fdxA), found in Hydrogenibacillus schlegelii (Bacillus schlegelii).